The primary structure comprises 524 residues: Pentatricopeptide repeat-containing protein At1g02150 (524 aa).

7 PPR repeats span residues 168-202 (DRRV…GYAL), 203-237 (HPLP…DIRL), 238-268 (DIYS…MKSD), 274-304 (NWTT…VEAR), 309-339 (NRIP…YKSV), 344-378 (PNLG…KSSY), and 379-413 (DPRI…GGKP).

The protein belongs to the PPR family. P subfamily.

The protein is Pentatricopeptide repeat-containing protein At1g02150 of Arabidopsis thaliana (Mouse-ear cress).